The chain runs to 452 residues: Protein henna (452 aa).

The 72-residue stretch at 36–107 (FSPKDSSLSS…EQCSYFNIIS (72 aa)) folds into the ACT domain. S272 carries the phosphoserine; by CaMK2 modification. Positions 284, 289, and 329 each coordinate Fe cation.

The protein belongs to the biopterin-dependent aromatic amino acid hydroxylase family. It depends on Fe(2+) as a cofactor. As to expression, phenylalanine hydrolase activity is found in yolk granules of embryos, and female abdomen and fat body tissues. Tryptophan hydroxylase is expressed in serotonergic neurons. Both enzymes are present in cuticular tissues.

It carries out the reaction (6R)-L-erythro-5,6,7,8-tetrahydrobiopterin + L-phenylalanine + O2 = (4aS,6R)-4a-hydroxy-L-erythro-5,6,7,8-tetrahydrobiopterin + L-tyrosine. It catalyses the reaction (6R)-L-erythro-5,6,7,8-tetrahydrobiopterin + L-tryptophan + O2 = 5-hydroxy-L-tryptophan + (4aS,6R)-4a-hydroxy-L-erythro-5,6,7,8-tetrahydrobiopterin. It participates in amino-acid degradation; L-phenylalanine degradation; acetoacetate and fumarate from L-phenylalanine: step 1/6. With respect to regulation, N-terminal region of PAH is thought to contain allosteric binding sites for phenylalanine and to constitute an 'inhibitory' domain that regulates the activity of a catalytic domain in the C-terminal portion of the molecule. This Drosophila melanogaster (Fruit fly) protein is Protein henna (Hn).